Here is a 368-residue protein sequence, read N- to C-terminus: 1-deoxy-D-xylulose 5-phosphate reductoisomerase (368 aa).

8 residues coordinate NADPH: Thr7, Gly8, Ser9, Ile10, Gly31, Lys32, Asn33, and Asn113. Lys114 provides a ligand contact to 1-deoxy-D-xylulose 5-phosphate. Residue Glu115 participates in NADPH binding. Asp133 lines the Mn(2+) pocket. Residues Ser134, Glu135, Ser158, and His181 each coordinate 1-deoxy-D-xylulose 5-phosphate. Residue Glu135 coordinates Mn(2+). Gly187 provides a ligand contact to NADPH. Residues Ser194, Asn199, Lys200, and Glu203 each contribute to the 1-deoxy-D-xylulose 5-phosphate site. Mn(2+) is bound at residue Glu203.

This sequence belongs to the DXR family. The cofactor is Mg(2+). Requires Mn(2+) as cofactor.

It catalyses the reaction 2-C-methyl-D-erythritol 4-phosphate + NADP(+) = 1-deoxy-D-xylulose 5-phosphate + NADPH + H(+). Its pathway is isoprenoid biosynthesis; isopentenyl diphosphate biosynthesis via DXP pathway; isopentenyl diphosphate from 1-deoxy-D-xylulose 5-phosphate: step 1/6. In terms of biological role, catalyzes the NADPH-dependent rearrangement and reduction of 1-deoxy-D-xylulose-5-phosphate (DXP) to 2-C-methyl-D-erythritol 4-phosphate (MEP). The protein is 1-deoxy-D-xylulose 5-phosphate reductoisomerase of Helicobacter pylori (strain ATCC 700392 / 26695) (Campylobacter pylori).